Reading from the N-terminus, the 271-residue chain is Interleukin-1 alpha (271 aa).

Residues 1–112 (MAKVPDMFED…DSEEEIIKPR (112 aa)) constitute a propeptide that is removed on maturation. K82 carries the post-translational modification N6-acetyllysine. N6-myristoyl lysine attachment occurs at residues K82 and K83. Residues 82 to 86 (KKRRL) are nuclear localization signal (NLS). A Phosphoserine modification is found at S87. 2 N-linked (GlcNAc...) asparagine glycosylation sites follow: N102 and N141.

The protein belongs to the IL-1 family. In terms of assembly, monomer. Interacts with TMED10; the interaction mediates the translocation from the cytoplasm into the ERGIC (endoplasmic reticulum-Golgi intermediate compartment) and thereby secretion. Interacts with IL1R1. Interacts with S100A13; this interaction is the first step in the export of IL1A, followed by direct translocation of this complex across the plasma membrane. Acetylated within its nuclear localization sequence, which impacts subcellular localization. Post-translationally, proteolytic processed by CAPN1 in a calcium-dependent manner. Cleavage from 31 kDa precursor to 18 kDa biologically active molecules. In terms of processing, phosphorylated. Phosphorylation greatly enhances susceptibility to digestion and promotes the conversion of pre-IL1A alpha to the biologically active IL1A.

It localises to the nucleus. The protein localises to the cytoplasm. The protein resides in the secreted. In terms of biological role, cytokine constitutively present intracellularly in nearly all resting non-hematopoietic cells that plays an important role in inflammation and bridges the innate and adaptive immune systems. After binding to its receptor IL1R1 together with its accessory protein IL1RAP, forms the high affinity interleukin-1 receptor complex. Signaling involves the recruitment of adapter molecules such as MYD88, IRAK1 or IRAK4. In turn, mediates the activation of NF-kappa-B and the three MAPK pathways p38, p42/p44 and JNK pathways. Within the cell, acts as an alarmin and cell death results in its liberation in the extracellular space after disruption of the cell membrane to induce inflammation and alert the host to injury or damage. In addition to its role as a danger signal, which occurs when the cytokine is passively released by cell necrosis, directly senses DNA damage and acts as a signal for genotoxic stress without loss of cell integrity. This is Interleukin-1 alpha (IL1A) from Homo sapiens (Human).